A 378-amino-acid chain; its full sequence is Lactosylceramide 1,3-N-acetyl-beta-D-glucosaminyltransferase (378 aa).

Topologically, residues methionine 1–glutamine 14 are cytoplasmic. A helical; Signal-anchor for type II membrane protein transmembrane segment spans residues leucine 15–isoleucine 35. Topologically, residues aspartate 36–isoleucine 378 are lumenal. Asparagine 59 carries N-linked (GlcNAc...) asparagine glycosylation.

The protein belongs to the glycosyltransferase 31 family. In terms of tissue distribution, widely expressed. Highly expressed in lung, colon, placenta, testis, pituitary gland and cerebellum. Weakly expressed in brain, liver, spleen, lymph node and thymus.

The protein localises to the golgi apparatus membrane. The enzyme catalyses a beta-D-Gal-(1-&gt;4)-beta-D-Glc-(1&lt;-&gt;1)-Cer(d18:1(4E)) + UDP-N-acetyl-alpha-D-glucosamine = a beta-D-GlcNAc-(1-&gt;3)-beta-D-Gal-(1-&gt;4)-beta-D-Glc-(1&lt;-&gt;1)-Cer(d18:1(4E)) + UDP + H(+). The catalysed reaction is a neolactoside nLc4Cer(d18:1(4E)) + UDP-N-acetyl-alpha-D-glucosamine = a neolactoside IV(3)-beta-GlcNAc-nLc4Cer(d18:1(4E)) + UDP + H(+). The protein operates within protein modification; protein glycosylation. Its function is as follows. Beta-1,3-N-acetylglucosaminyltransferase that plays a key role in the synthesis of lacto- or neolacto-series carbohydrate chains on glycolipids, notably by participating in biosynthesis of HNK-1 and Lewis X carbohydrate structures. Has strong activity toward lactosylceramide (LacCer) and neolactotetraosylceramide (nLc(4)Cer; paragloboside), resulting in the synthesis of Lc(3)Cer and neolactopentaosylceramide (nLc(5)Cer), respectively. Probably plays a central role in regulating neolacto-series glycolipid synthesis during embryonic development. This is Lactosylceramide 1,3-N-acetyl-beta-D-glucosaminyltransferase from Homo sapiens (Human).